The following is a 447-amino-acid chain: Phosphoglucosamine mutase (447 aa).

Ser106 acts as the Phosphoserine intermediate in catalysis. Residues Ser106, Asp245, Asp247, and Asp249 each coordinate Mg(2+). Position 106 is a phosphoserine (Ser106).

This sequence belongs to the phosphohexose mutase family. Requires Mg(2+) as cofactor. Post-translationally, activated by phosphorylation.

The enzyme catalyses alpha-D-glucosamine 1-phosphate = D-glucosamine 6-phosphate. Its function is as follows. Catalyzes the conversion of glucosamine-6-phosphate to glucosamine-1-phosphate. The chain is Phosphoglucosamine mutase from Cupriavidus pinatubonensis (strain JMP 134 / LMG 1197) (Cupriavidus necator (strain JMP 134)).